The sequence spans 470 residues: MPLNKKVLAIVLAGGEGNRLMPLTADRAKPAVPFAGSYRLIDFAISNLVNSRYLQIVVLTQYKSHSLDRHISEAWRMSTQLGNYVASVPAQQRVGKSWFLGSANAIYQSLNLIHDANPDIVVVVGADHVYRMDFAQMVEQHVHSGAKATVAAVRQPLNMADQFGVIEVDQNDPQKIAAFVEKPASTPGLAADPSQFLASMGNYVFDADALVAALHVDAERLDTKHDMGGDIIPYFVNQGEAGVYDFTLNEIPGSTERDRTYWRDVGTIDSFYDAHMDLISPLPVFNLYNSEWPIYTRQSISPPAKFVRGLNNTVGTALDSIVSSGVVISGGVVEGSVLSNDVYVATSSRVIDSVLMDKVQVGEGAVINRAIIDKNVKVPAGAAIGLDPELDRARGFKVTDSGITVLSKYQEVPEPGEHERQLAAKNLHLVPNAVKAAADQYPEVRESVDKVARTHAAAAAAEASPGARVS.

Alpha-D-glucose 1-phosphate is bound by residues Gly-164, Glu-181–Lys-182, and Ser-199.

It belongs to the bacterial/plant glucose-1-phosphate adenylyltransferase family. In terms of assembly, homotetramer.

It catalyses the reaction alpha-D-glucose 1-phosphate + ATP + H(+) = ADP-alpha-D-glucose + diphosphate. Its pathway is glycan biosynthesis; glycogen biosynthesis. Involved in the biosynthesis of ADP-glucose, a building block required for the elongation reactions to produce glycogen. Catalyzes the reaction between ATP and alpha-D-glucose 1-phosphate (G1P) to produce pyrophosphate and ADP-Glc. The sequence is that of Glucose-1-phosphate adenylyltransferase from Pseudarthrobacter chlorophenolicus (strain ATCC 700700 / DSM 12829 / CIP 107037 / JCM 12360 / KCTC 9906 / NCIMB 13794 / A6) (Arthrobacter chlorophenolicus).